The following is a 180-amino-acid chain: Pyruvate synthase subunit PorC (180 aa).

In terms of assembly, heterotetramer of one alpha, one beta, one delta and one gamma chain.

The enzyme catalyses 2 oxidized [2Fe-2S]-[ferredoxin] + pyruvate + CoA = 2 reduced [2Fe-2S]-[ferredoxin] + acetyl-CoA + CO2 + H(+). This Methanothermobacter thermautotrophicus (strain ATCC 29096 / DSM 1053 / JCM 10044 / NBRC 100330 / Delta H) (Methanobacterium thermoautotrophicum) protein is Pyruvate synthase subunit PorC (porC).